A 184-amino-acid polypeptide reads, in one-letter code: GTP cyclohydrolase 1 (184 aa).

3 residues coordinate Zn(2+): cysteine 75, histidine 78, and cysteine 146.

This sequence belongs to the GTP cyclohydrolase I family. As to quaternary structure, homomer.

It carries out the reaction GTP + H2O = 7,8-dihydroneopterin 3'-triphosphate + formate + H(+). It functions in the pathway cofactor biosynthesis; 7,8-dihydroneopterin triphosphate biosynthesis; 7,8-dihydroneopterin triphosphate from GTP: step 1/1. The chain is GTP cyclohydrolase 1 from Finegoldia magna (strain ATCC 29328 / DSM 20472 / WAL 2508) (Peptostreptococcus magnus).